A 500-amino-acid chain; its full sequence is Probable zinc metalloprotease MGYG_02393 (500 aa).

An N-terminal signal peptide occupies residues 1 to 24 (MHLSMGGLLPGLALLASANALALA). N-linked (GlcNAc...) asparagine glycans are attached at residues N61, N103, and N124. Zn(2+) is bound by residues H174, D194, and E230. Residue N245 is glycosylated (N-linked (GlcNAc...) asparagine). D257 contacts Zn(2+). The Fibronectin type-III domain occupies 414-500 (MPRNVRVNTS…ERGVAVLPFP (87 aa)). N421 and N427 each carry an N-linked (GlcNAc...) asparagine glycan.

This sequence belongs to the peptidase M28 family. M28B subfamily. Requires Zn(2+) as cofactor.

It is found in the secreted. The protein is Probable zinc metalloprotease MGYG_02393 of Arthroderma gypseum (strain ATCC MYA-4604 / CBS 118893) (Microsporum gypseum).